A 586-amino-acid chain; its full sequence is Aspartate--tRNA(Asp/Asn) ligase (586 aa).

Residue glutamate 172 participates in L-aspartate binding. Residues 196-199 (QLYK) form an aspartate region. Arginine 218 is a binding site for L-aspartate. ATP-binding positions include 218-220 (RDE) and glutamine 227. Histidine 446 is a binding site for L-aspartate. Glutamate 480 contacts ATP. Arginine 487 provides a ligand contact to L-aspartate. Position 532–535 (532–535 (GIDR)) interacts with ATP.

The protein belongs to the class-II aminoacyl-tRNA synthetase family. Type 1 subfamily. Homodimer.

It localises to the cytoplasm. The enzyme catalyses tRNA(Asx) + L-aspartate + ATP = L-aspartyl-tRNA(Asx) + AMP + diphosphate. In terms of biological role, aspartyl-tRNA synthetase with relaxed tRNA specificity since it is able to aspartylate not only its cognate tRNA(Asp) but also tRNA(Asn). Reaction proceeds in two steps: L-aspartate is first activated by ATP to form Asp-AMP and then transferred to the acceptor end of tRNA(Asp/Asn). The protein is Aspartate--tRNA(Asp/Asn) ligase of Borreliella afzelii (strain PKo) (Borrelia afzelii).